Here is a 306-residue protein sequence, read N- to C-terminus: tRNA pseudouridine synthase B (306 aa).

Asp-38 acts as the Nucleophile in catalysis.

Belongs to the pseudouridine synthase TruB family. Type 1 subfamily.

The catalysed reaction is uridine(55) in tRNA = pseudouridine(55) in tRNA. Functionally, responsible for synthesis of pseudouridine from uracil-55 in the psi GC loop of transfer RNAs. The sequence is that of tRNA pseudouridine synthase B from Syntrophotalea carbinolica (strain DSM 2380 / NBRC 103641 / GraBd1) (Pelobacter carbinolicus).